Consider the following 237-residue polypeptide: ADTIVAVELDSYPNTDIGDPNYPHIGIDIKSIRSKSTARWNMQTGKVGTVHISYNSVAKRLSAVVSYTGSSSTTVSYDVDLNNVLPEWVRVGLSATTGLYKETNTILSWSFTSKLKTNSIADANSLHFTFNQFSQNPKDLILQGDATTDSDGNLELTKVSSSGDPQGNSVGRALFYAPVHIWEKSAVVASFDATFTFLIKSPDRDPADGITFFIANPDTSIPSGSGGRLLGLFPDAN.

Mn(2+) is bound by residues Glu-8 and Asp-10. Ca(2+)-binding residues include Asp-10, Tyr-12, Asn-14, and Asp-19. Residue Tyr-12 participates in a carbohydrate binding. Mn(2+) is bound by residues Asp-19, His-24, and Ser-34. 99–100 contacts a carbohydrate; sequence LY. Asp-208 contacts Ca(2+). An a carbohydrate-binding site is contributed by Arg-228.

The protein belongs to the leguminous lectin family. In terms of assembly, equilibrium between homodimer and homotetramer. Oligomerization is pH-dependent with homotetramers forming at pH 6.5 and above. In terms of processing, the beta and gamma chains are produced by partial proteolytic processing of the lectin alpha chain by an asparaginyl endopeptidase. Mixture of 60% alpha lectin and 40% of its beta and gamma proteolytic fragments. Seed.

Its subcellular location is the vacuole. The protein localises to the aleurone grain. D-mannose/D-glucose-binding lectin. Induces histamine release in mast cells from hamster and rat. Induces lymphocyte proliferation and IFNG production. This chain is Lectin alpha chain, found in Macropsychanthus bicolor (Dioclea rostrata).